The following is a 129-amino-acid chain: Cytochrome c oxidase subunit 5B, mitochondrial (129 aa).

Residues 1 to 31 (MASRLLRGAGALAAQALRARGPSGAAAVRSM) constitute a mitochondrion transit peptide. An N6-acetyllysine mark is found at lysine 68 and lysine 86. Zn(2+)-binding residues include cysteine 91, cysteine 93, cysteine 113, and cysteine 116. Position 121 is an N6-acetyllysine (lysine 121).

It belongs to the cytochrome c oxidase subunit 5B family. As to quaternary structure, component of the cytochrome c oxidase (complex IV, CIV), a multisubunit enzyme composed of 14 subunits. The complex is composed of a catalytic core of 3 subunits MT-CO1, MT-CO2 and MT-CO3, encoded in the mitochondrial DNA, and 11 supernumerary subunits COX4I, COX5A, COX5B, COX6A, COX6B, COX6C, COX7A, COX7B, COX7C, COX8 and NDUFA4, which are encoded in the nuclear genome. The complex exists as a monomer or a dimer and forms supercomplexes (SCs) in the inner mitochondrial membrane with NADH-ubiquinone oxidoreductase (complex I, CI) and ubiquinol-cytochrome c oxidoreductase (cytochrome b-c1 complex, complex III, CIII), resulting in different assemblies (supercomplex SCI(1)III(2)IV(1) and megacomplex MCI(2)III(2)IV(2)).

The protein localises to the mitochondrion inner membrane. Its pathway is energy metabolism; oxidative phosphorylation. Functionally, component of the cytochrome c oxidase, the last enzyme in the mitochondrial electron transport chain which drives oxidative phosphorylation. The respiratory chain contains 3 multisubunit complexes succinate dehydrogenase (complex II, CII), ubiquinol-cytochrome c oxidoreductase (cytochrome b-c1 complex, complex III, CIII) and cytochrome c oxidase (complex IV, CIV), that cooperate to transfer electrons derived from NADH and succinate to molecular oxygen, creating an electrochemical gradient over the inner membrane that drives transmembrane transport and the ATP synthase. Cytochrome c oxidase is the component of the respiratory chain that catalyzes the reduction of oxygen to water. Electrons originating from reduced cytochrome c in the intermembrane space (IMS) are transferred via the dinuclear copper A center (CU(A)) of subunit 2 and heme A of subunit 1 to the active site in subunit 1, a binuclear center (BNC) formed by heme A3 and copper B (CU(B)). The BNC reduces molecular oxygen to 2 water molecules using 4 electrons from cytochrome c in the IMS and 4 protons from the mitochondrial matrix. This Pongo abelii (Sumatran orangutan) protein is Cytochrome c oxidase subunit 5B, mitochondrial (COX5B).